The following is a 275-amino-acid chain: NH(3)-dependent NAD(+) synthetase (275 aa).

46-53 (GISGGQDS) lines the ATP pocket. Aspartate 52 is a binding site for Mg(2+). Position 140 (arginine 140) interacts with deamido-NAD(+). ATP is bound at residue threonine 160. Glutamate 165 is a binding site for Mg(2+). The deamido-NAD(+) site is built by lysine 173 and aspartate 180. Residues lysine 189 and threonine 211 each coordinate ATP. 260–261 (HK) contributes to the deamido-NAD(+) binding site.

It belongs to the NAD synthetase family. Homodimer.

The catalysed reaction is deamido-NAD(+) + NH4(+) + ATP = AMP + diphosphate + NAD(+) + H(+). It functions in the pathway cofactor biosynthesis; NAD(+) biosynthesis; NAD(+) from deamido-NAD(+) (ammonia route): step 1/1. Functionally, catalyzes the ATP-dependent amidation of deamido-NAD to form NAD. Uses ammonia as a nitrogen source. This is NH(3)-dependent NAD(+) synthetase from Shigella flexneri serotype 5b (strain 8401).